A 287-amino-acid chain; its full sequence is Probable prolyl 4-hydroxylase 3 (287 aa).

Topologically, residues 1 to 16 are cytoplasmic; the sequence is MAKLRHSRFQARKWST. Residues 17–37 form a helical; Signal-anchor for type II membrane protein membrane-spanning segment; sequence LMLVLFMLFMLTIVLLMLLAF. Residues 38–287 are Lumenal-facing; that stretch reads GVFSLPINND…KWMHVGEYKI (250 aa). Residues 159–282 form the Fe2OG dioxygenase domain; that stretch reads HGEGLQVLHY…KWSSTKWMHV (124 aa). H177 and D179 together coordinate Fe cation. The N-linked (GlcNAc...) asparagine glycan is linked to N218. H263 contacts Fe cation. A 2-oxoglutarate-binding site is contributed by K273.

It belongs to the P4HA family. Fe(2+) is required as a cofactor. It depends on L-ascorbate as a cofactor.

It is found in the endoplasmic reticulum membrane. The enzyme catalyses L-prolyl-[collagen] + 2-oxoglutarate + O2 = trans-4-hydroxy-L-prolyl-[collagen] + succinate + CO2. Functionally, catalyzes the post-translational formation of 4-hydroxyproline in -Xaa-Pro-Gly- sequences in proline-rich peptide sequences of plant glycoproteins and other proteins. Hydroxyprolines are important constituent of many plant cell wall glycoproteins such as extensins, hydroxyproline-rich glycoproteins, lectins and arabinogalactan proteins. This is Probable prolyl 4-hydroxylase 3 from Arabidopsis thaliana (Mouse-ear cress).